The chain runs to 526 residues: Lysine--tRNA ligase (526 aa).

Mg(2+)-binding residues include glutamate 431 and glutamate 438.

Belongs to the class-II aminoacyl-tRNA synthetase family. In terms of assembly, homodimer. Mg(2+) serves as cofactor.

Its subcellular location is the cytoplasm. It catalyses the reaction tRNA(Lys) + L-lysine + ATP = L-lysyl-tRNA(Lys) + AMP + diphosphate. The chain is Lysine--tRNA ligase from Chlamydia felis (strain Fe/C-56) (Chlamydophila felis).